A 137-amino-acid chain; its full sequence is GEL complex subunit OPTI (137 aa).

Topologically, residues 1–44 (MSGGRRKEEPPQPQLANGALKVSVWSKVLRSDAAWEDKDEFLDV) are cytoplasmic. Residues 45–65 (IYWFRQIIAVVLGVIWGVLPL) form a helical membrane-spanning segment. Position 66 (arginine 66) is a topological domain, lumenal. A helical membrane pass occupies residues 67 to 84 (GFLGIAGFCLINAGVLYL). Residues 85–103 (YFSNYLQIDEEEYGGTWEL) lie on the Cytoplasmic side of the membrane. A helical membrane pass occupies residues 104–127 (TKEGFMTSFALFMVCVADSFTTGH). The Lumenal portion of the chain corresponds to 128–137 (LDHLLHCHPL).

This sequence belongs to the EMC6 family. Component of the GET- and EMC-like (GEL) complex, composed of RAB5IF/OPTI and TMCO1. The GEL complex is part of the multi-pass translocon (MPT) complex, composed of three subcomplexes, the GEL complex (composed of RAB5IF/OPTI and TMCO1), the BOS complex (composed of NCLN/Nicalin, NOMO and TMEM147) and the PAT complex (composed of WDR83OS/Asterix and CCDC47). The MPT complex associates with the SEC61 complex. Interacts with NDUFS3, NDUFA4, NDUFV1, NDUFA9 and NDUFS8 of the mitochondrial membrane respiratory chain NADH dehydrogenase (Complex I). Interacts with UQCRC2 of the ubiquinol-cytochrome c reductase complex (Complex III). Interacts with COX5A and COX7C of the cytochrome c oxidase complex (Complex IV). As to expression, expressed in embryonic stem cells and differentiated neuronal cells.

The protein resides in the endoplasmic reticulum membrane. It is found in the mitochondrion inner membrane. Its function is as follows. Component of the multi-pass translocon (MPT) complex that mediates insertion of multi-pass membrane proteins into the lipid bilayer of membranes. The MPT complex takes over after the SEC61 complex: following membrane insertion of the first few transmembrane segments of proteins by the SEC61 complex, the MPT complex occludes the lateral gate of the SEC61 complex to promote insertion of subsequent transmembrane regions. Within the MPT complex, the GEL subcomplex may mediate insertion of transmembrane regions into the membrane. In addition to its role in multi-pass membrane insertion, RAB5IF/OPTI also acts as an assembly factor for mitochondrial respiratory complexes. This chain is GEL complex subunit OPTI, found in Homo sapiens (Human).